The primary structure comprises 293 residues: MPWIQLRINTNSDDAETISDLLMEEGSVSITFEDGKDTPIFEPKLGETPLWRDTVVVALFDAETDLTPTIAMLKTLPFLGENFSHKVEQIEDKDWVREWMDNFHPIQFGTRLWICPSWREIPDPTAVNVILDPGLAFGTGTHPTTALCLEWLDSLDLSNKEVIDFGCGSGILAVAALKLGAKNVTGIDIDYQAIDASRANAERNDVADKLALYLPEDQPADLKADVLVANILAGPLRELAPLIAERVKTGGKLALSGLLKEQAQEISDFYSQWFDMDVAAHKEDWSRLTGKRK.

4 residues coordinate S-adenosyl-L-methionine: Thr145, Gly166, Asp188, and Asn230.

This sequence belongs to the methyltransferase superfamily. PrmA family.

The protein resides in the cytoplasm. The catalysed reaction is L-lysyl-[protein] + 3 S-adenosyl-L-methionine = N(6),N(6),N(6)-trimethyl-L-lysyl-[protein] + 3 S-adenosyl-L-homocysteine + 3 H(+). Methylates ribosomal protein L11. The protein is Ribosomal protein L11 methyltransferase of Shewanella baltica (strain OS185).